The following is a 367-amino-acid chain: MNCKNMDTSYEIINYLTKDELDIDLSCMDKKERYKIWKRLPKCELHCHLDVCFSVDFFLNVIRKYNIQPNMSDEEIIDYYLFSKPGKSLDEFVEKALRLTDIYIDYTVVEDLAKHAVFNKYKEGVVLMEFRYSPSFMSFKHNLDKDLIHEAIVKGLNEAVALLEYKIQVGLLCTGDGGLSHERMKEAAEFCIKHKKDFVGYDHAGHEVDLKPFKDIFDNIREEGISLSVHAGEDVSIPNLNSLYTAINLLHVKRIGHGIRVSESQELIDLVKEKDILLEVCPISNVLLNNVKSMDTHPIRMLYDAGVKVSVNSDDPGMFLTNITDNYEELYTHLNFTLADFMKMNLWAVQKSFVDPDIKNKIISKYF.

The Zn(2+) site is built by His46 and His48. A purine D-ribonucleoside-binding positions include 48–50, Asp176, and Gly205; that span reads HLD. Positions 174-188 are gating helix loop; regulates binding affinity for substrates and thus substrate selectivity; that stretch reads TGDGGLSHERMKEAA. Residue His230 coordinates Zn(2+). A purine D-ribonucleoside contacts are provided by Glu233, His257, and Asp314. Asp314 serves as a coordination point for Zn(2+).

The protein belongs to the metallo-dependent hydrolases superfamily. Adenosine and AMP deaminases family. It depends on Zn(2+) as a cofactor.

The catalysed reaction is adenosine + H2O + H(+) = inosine + NH4(+). It catalyses the reaction S-methyl-5'-thioadenosine + H2O + H(+) = S-methyl-5'-thioinosine + NH4(+). It participates in purine metabolism; purine nucleoside salvage. With respect to regulation, inhibited by coformycin and methylthiocoformycin (MT-coformycin). Functionally, catalyzes the hydrolytic deamination of adenosine to produce inosine. Unlike mammalian adenosine deaminases, also catalyzes the deamination of 5'-methylthioadenosine (MTA), a by-product of polyamine biosynthesis, to produce 5'-methylthioinosine (MTI). Plays an essential role in the purine salvage pathway which allows the parasite to use host cell purines for the synthesis of nucleic acids. This chain is Adenosine deaminase, found in Plasmodium falciparum (isolate 3D7).